The primary structure comprises 122 residues: Large ribosomal subunit protein uL14 (122 aa).

The protein belongs to the universal ribosomal protein uL14 family. Part of the 50S ribosomal subunit. Forms a cluster with proteins L3 and L19. In the 70S ribosome, L14 and L19 interact and together make contacts with the 16S rRNA in bridges B5 and B8.

Functionally, binds to 23S rRNA. Forms part of two intersubunit bridges in the 70S ribosome. In Nitrosococcus oceani (strain ATCC 19707 / BCRC 17464 / JCM 30415 / NCIMB 11848 / C-107), this protein is Large ribosomal subunit protein uL14.